We begin with the raw amino-acid sequence, 110 residues long: UPF0122 protein SAR1212 (110 aa).

Belongs to the UPF0122 family.

Might take part in the signal recognition particle (SRP) pathway. This is inferred from the conservation of its genetic proximity to ftsY/ffh. May be a regulatory protein. In Staphylococcus aureus (strain MRSA252), this protein is UPF0122 protein SAR1212.